Reading from the N-terminus, the 189-residue chain is MAEKLHPRIDNGLPKESASFAGGTLVCACTSKPVKVKVKGQIAHNHACGCTKCWKPEGAIFSVVAVAGTGDVTVTENGDKLKVVDASALIQRHACTGCGVHMHGPVERDHAFKGLTFIHPERFVEDGWSPPGFTAFVSSIIESGVDPKRMDGIRAQLRTIGLEPYDCLNPGLMDYIATWTAKKSGALPA.

In terms of domain architecture, CENP-V/GFA spans 20–166; it reads FAGGTLVCAC…LRTIGLEPYD (147 aa). Residues cysteine 27, cysteine 29, cysteine 48, cysteine 50, cysteine 53, cysteine 95, and cysteine 98 each contribute to the Zn(2+) site.

It belongs to the Gfa family. Zn(2+) serves as cofactor.

The catalysed reaction is S-(hydroxymethyl)glutathione = glutathione + formaldehyde. The protein operates within one-carbon metabolism; formaldehyde degradation; formate from formaldehyde (glutathione route): step 1/3. Catalyzes the condensation of formaldehyde and glutathione to S-hydroxymethylglutathione. The protein is Glutathione-dependent formaldehyde-activating enzyme of Mesorhizobium japonicum (strain LMG 29417 / CECT 9101 / MAFF 303099) (Mesorhizobium loti (strain MAFF 303099)).